We begin with the raw amino-acid sequence, 341 residues long: tRNA N6-adenosine threonylcarbamoyltransferase (341 aa).

2 residues coordinate Fe cation: His111 and His115. Substrate contacts are provided by residues 134–138, Asp167, Gly180, and Asn276; that span reads LVSGG. Residue Asp304 participates in Fe cation binding.

The protein belongs to the KAE1 / TsaD family. Fe(2+) serves as cofactor.

The protein resides in the cytoplasm. The catalysed reaction is L-threonylcarbamoyladenylate + adenosine(37) in tRNA = N(6)-L-threonylcarbamoyladenosine(37) in tRNA + AMP + H(+). Required for the formation of a threonylcarbamoyl group on adenosine at position 37 (t(6)A37) in tRNAs that read codons beginning with adenine. Is involved in the transfer of the threonylcarbamoyl moiety of threonylcarbamoyl-AMP (TC-AMP) to the N6 group of A37, together with TsaE and TsaB. TsaD likely plays a direct catalytic role in this reaction. The protein is tRNA N6-adenosine threonylcarbamoyltransferase of Pseudomonas fluorescens (strain SBW25).